The following is a 629-amino-acid chain: Phosphomethylpyrimidine synthase (629 aa).

Residues Asn215, Met244, Tyr273, His309, 329-331, 370-373, and Glu409 contribute to the substrate site; these read SRG and DGLR. A Zn(2+)-binding site is contributed by His413. Residue Tyr436 coordinates substrate. His477 lines the Zn(2+) pocket. [4Fe-4S] cluster is bound by residues Cys557, Cys560, and Cys565. The interval 589–610 is disordered; it reads ENIKRETSAEEAEEAREGMSDM.

It belongs to the ThiC family. In terms of assembly, homodimer. It depends on [4Fe-4S] cluster as a cofactor.

The catalysed reaction is 5-amino-1-(5-phospho-beta-D-ribosyl)imidazole + S-adenosyl-L-methionine = 4-amino-2-methyl-5-(phosphooxymethyl)pyrimidine + CO + 5'-deoxyadenosine + formate + L-methionine + 3 H(+). Its pathway is cofactor biosynthesis; thiamine diphosphate biosynthesis. In terms of biological role, catalyzes the synthesis of the hydroxymethylpyrimidine phosphate (HMP-P) moiety of thiamine from aminoimidazole ribotide (AIR) in a radical S-adenosyl-L-methionine (SAM)-dependent reaction. This is Phosphomethylpyrimidine synthase from Erythrobacter litoralis (strain HTCC2594).